A 464-amino-acid chain; its full sequence is MSKTLFDKVWDSHVVRKIEDGPDVFFIDRHFIHEVTSPVAFLGLKSRGVNVLYPERTFATADHNTPTINQHLPVQDPLSANQLQALEDNANEYGISHWGLGHQKNGIVHVVGPENGITLPGATIVCGDSHTSTHGAFGAIAFGIGTSEVEMVLSTQCIMQPKPKKMRINVNGKLSKGVGPKDVALYIIAQLTTSGGTGYFVEYAGDVFENMTMEGRMTVCNLSIEMGARGGMIAPDQTTFDFLEGRLYAPKGEAWTKAVEYWKTLKTDADAVFDAELNIKAEDIEPMITYGTNPGMGIGITKHIPSAKEVEGGEETYKKSLAYMGFNEDDVMIGKQIDYVFLGSCTNGRIEDFRAFAEIVKGRKKAENVTAWLVPGSHVVEAQIKEEGILDILTEAGFVLRQPGCSACLAMNDDKVPAGKYAVSTSNRNFEGRQGPGSRTLLASPIMAAAAAVTGKLTDPRELF.

[4Fe-4S] cluster-binding residues include Cys345, Cys405, and Cys408.

It belongs to the aconitase/IPM isomerase family. LeuC type 1 subfamily. Heterodimer of LeuC and LeuD. [4Fe-4S] cluster serves as cofactor.

It catalyses the reaction (2R,3S)-3-isopropylmalate = (2S)-2-isopropylmalate. It participates in amino-acid biosynthesis; L-leucine biosynthesis; L-leucine from 3-methyl-2-oxobutanoate: step 2/4. In terms of biological role, catalyzes the isomerization between 2-isopropylmalate and 3-isopropylmalate, via the formation of 2-isopropylmaleate. This chain is 3-isopropylmalate dehydratase large subunit, found in Flavobacterium johnsoniae (strain ATCC 17061 / DSM 2064 / JCM 8514 / BCRC 14874 / CCUG 350202 / NBRC 14942 / NCIMB 11054 / UW101) (Cytophaga johnsonae).